Here is a 250-residue protein sequence, read N- to C-terminus: MAVTMRQMLEAGVHFGHQTRFWNPKMAPFIFGHRNKIHIINLEKTLPMYNDALKYARQLAANRGTILFVGTKRQSRDTIAEEAQRAGMPYVNARWLGGMLTNFKTLKVSIKRLKDMEAALEAGETERMSKKEALLFEREMAKLQKSIGGVKDMGGIPDAIFVVDVGYHKIAVTEANKLGIPVIAVVDTNHSPEGIDYVIPGNDDASKAVALYTAGVADAIVEGRANAVNEVVQAARGGDGDEFVEVNAEA.

This sequence belongs to the universal ribosomal protein uS2 family.

The chain is Small ribosomal subunit protein uS2 from Paraburkholderia xenovorans (strain LB400).